The primary structure comprises 507 residues: ATP synthase subunit alpha (507 aa).

Residue 168–175 (GDRKTGKT) participates in ATP binding.

This sequence belongs to the ATPase alpha/beta chains family. As to quaternary structure, F-type ATPases have 2 components, CF(1) - the catalytic core - and CF(0) - the membrane proton channel. CF(1) has five subunits: alpha(3), beta(3), gamma(1), delta(1), epsilon(1). CF(0) has three main subunits: a(1), b(2) and c(9-12). The alpha and beta chains form an alternating ring which encloses part of the gamma chain. CF(1) is attached to CF(0) by a central stalk formed by the gamma and epsilon chains, while a peripheral stalk is formed by the delta and b chains.

The protein resides in the cell inner membrane. It catalyses the reaction ATP + H2O + 4 H(+)(in) = ADP + phosphate + 5 H(+)(out). Produces ATP from ADP in the presence of a proton gradient across the membrane. The alpha chain is a regulatory subunit. In Ehrlichia ruminantium (strain Gardel), this protein is ATP synthase subunit alpha.